A 1119-amino-acid polypeptide reads, in one-letter code: Multiple epidermal growth factor-like domains protein 10 (1119 aa).

The N-terminal stretch at 1–22 is a signal peptide; sequence MMSSCGPLLLAVSCCLVALTSS. Topologically, residues 23–851 are extracellular; the sequence is LNLDDPNVCS…ALPMDSYQIG (829 aa). Residues 27-104 form the EMI domain; it reads DPNVCSHWES…FYESGDICVP (78 aa). Cystine bridges form between cysteine 31/cysteine 92, cysteine 57/cysteine 66, cysteine 91/cysteine 102, cysteine 102/cysteine 115, cysteine 106/cysteine 121, cysteine 123/cysteine 132, cysteine 145/cysteine 157, cysteine 151/cysteine 164, cysteine 166/cysteine 175, cysteine 188/cysteine 200, cysteine 194/cysteine 207, cysteine 209/cysteine 218, cysteine 231/cysteine 243, cysteine 237/cysteine 250, and cysteine 252/cysteine 260. 4 EGF-like domains span residues 98-133, 141-176, 184-219, and 227-261; these read SGDI…ADCS, WGPH…WRCE, YGNN…AFCE, and HGQQ…MVCG. Residue asparagine 197 is glycosylated (N-linked (GlcNAc...) asparagine). Asparagine 272 carries an N-linked (GlcNAc...) asparagine glycan. 2 EGF-like domains span residues 274–304 and 312–347; these read SQEC…ERCQ and YGIG…ESCE. Intrachain disulfides connect cysteine 277/cysteine 285, cysteine 279/cysteine 292, cysteine 294/cysteine 303, cysteine 316/cysteine 328, cysteine 322/cysteine 335, and cysteine 337/cysteine 346. N-linked (GlcNAc...) asparagine glycosylation is found at asparagine 369 and asparagine 393. 9 EGF-like domains span residues 401–436, 444–479, 487–522, 573–608, 616–653, 666–696, 709–739, 747–782, and 795–825; these read YGEA…SDCA, YGIN…VDCS, WGLG…DRCD, WGPN…TTCQ, FGHR…ALCN, GGSC…SDCS, IHTC…LYCT, YGKD…RHCE, and RQVC…TRCD. 3 disulfide bridges follow: cysteine 405-cysteine 417, cysteine 411-cysteine 424, and cysteine 426-cysteine 435. Asparagine 447 carries N-linked (GlcNAc...) asparagine glycosylation. Disulfide bonds link cysteine 448/cysteine 460, cysteine 454/cysteine 467, cysteine 469/cysteine 478, cysteine 491/cysteine 503, cysteine 497/cysteine 510, and cysteine 512/cysteine 521. Asparagine 492 is a glycosylation site (N-linked (GlcNAc...) asparagine). The N-linked (GlcNAc...) asparagine glycan is linked to asparagine 576. 18 disulfide bridges follow: cysteine 577–cysteine 589, cysteine 583–cysteine 596, cysteine 598–cysteine 607, cysteine 620–cysteine 634, cysteine 624–cysteine 641, cysteine 643–cysteine 652, cysteine 669–cysteine 677, cysteine 671–cysteine 684, cysteine 686–cysteine 695, cysteine 712–cysteine 720, cysteine 714–cysteine 727, cysteine 729–cysteine 738, cysteine 751–cysteine 763, cysteine 757–cysteine 770, cysteine 772–cysteine 781, cysteine 798–cysteine 806, cysteine 800–cysteine 813, and cysteine 815–cysteine 824. N-linked (GlcNAc...) asparagine glycosylation is present at asparagine 674. A glycan (N-linked (GlcNAc...) asparagine) is linked at asparagine 803. A helical transmembrane segment spans residues 852–872; that stretch reads AITGIIILVLLVLILLLLFII. Residues 873–1119 are Cytoplasmic-facing; sequence YRKKQKGKES…SSPSPTEDSK (247 aa).

It belongs to the MEGF family.

Its subcellular location is the cell membrane. In terms of biological role, membrane receptor involved in phagocytosis by macrophages and astrocytes of apoptotic cells. Essential factor in the regulation of muscle development including myogenesis. Likely plays a key role in muscle cell proliferation, adhesion and motility. May control the balance between skeletal muscle satellite cells proliferation and differentiation through regulation of the notch signaling pathway. The sequence is that of Multiple epidermal growth factor-like domains protein 10 from Danio rerio (Zebrafish).